The following is a 132-amino-acid chain: L-ectoine synthase (132 aa).

This sequence belongs to the ectoine synthase family.

It catalyses the reaction (2S)-4-acetamido-2-aminobutanoate = L-ectoine + H2O. The protein operates within amine and polyamine biosynthesis; ectoine biosynthesis; L-ectoine from L-aspartate 4-semialdehyde: step 3/3. Catalyzes the circularization of gamma-N-acetyl-alpha,gamma-diaminobutyric acid (ADABA) to ectoine (1,4,5,6-tetrahydro-2-methyl-4-pyrimidine carboxylic acid), which is an excellent osmoprotectant. The sequence is that of L-ectoine synthase from Hahella chejuensis (strain KCTC 2396).